The sequence spans 143 residues: Large ribosomal subunit protein uL11 (143 aa).

It belongs to the universal ribosomal protein uL11 family. As to quaternary structure, part of the ribosomal stalk of the 50S ribosomal subunit. Interacts with L10 and the large rRNA to form the base of the stalk. L10 forms an elongated spine to which L12 dimers bind in a sequential fashion forming a multimeric L10(L12)X complex. In terms of processing, one or more lysine residues are methylated.

Its function is as follows. Forms part of the ribosomal stalk which helps the ribosome interact with GTP-bound translation factors. The protein is Large ribosomal subunit protein uL11 of Rhizobium etli (strain CIAT 652).